The chain runs to 96 residues: Aspartyl/glutamyl-tRNA(Asn/Gln) amidotransferase subunit C (96 aa).

The interval 64–96 is disordered; the sequence is REDEPEPGLPREEVLKNAPDQQDGQFRVPAILE.

Belongs to the GatC family. In terms of assembly, heterotrimer of A, B and C subunits.

The enzyme catalyses L-glutamyl-tRNA(Gln) + L-glutamine + ATP + H2O = L-glutaminyl-tRNA(Gln) + L-glutamate + ADP + phosphate + H(+). The catalysed reaction is L-aspartyl-tRNA(Asn) + L-glutamine + ATP + H2O = L-asparaginyl-tRNA(Asn) + L-glutamate + ADP + phosphate + 2 H(+). In terms of biological role, allows the formation of correctly charged Asn-tRNA(Asn) or Gln-tRNA(Gln) through the transamidation of misacylated Asp-tRNA(Asn) or Glu-tRNA(Gln) in organisms which lack either or both of asparaginyl-tRNA or glutaminyl-tRNA synthetases. The reaction takes place in the presence of glutamine and ATP through an activated phospho-Asp-tRNA(Asn) or phospho-Glu-tRNA(Gln). The polypeptide is Aspartyl/glutamyl-tRNA(Asn/Gln) amidotransferase subunit C (Geobacillus thermodenitrificans (strain NG80-2)).